The following is a 569-amino-acid chain: Dihydroxy-acid dehydratase (569 aa).

D80 contacts Mg(2+). C121 is a binding site for [2Fe-2S] cluster. Residues D122 and K123 each contribute to the Mg(2+) site. Position 123 is an N6-carboxylysine (K123). Residue C194 coordinates [2Fe-2S] cluster. A Mg(2+)-binding site is contributed by E446. The active-site Proton acceptor is S472.

Belongs to the IlvD/Edd family. In terms of assembly, homodimer. It depends on [2Fe-2S] cluster as a cofactor. The cofactor is Mg(2+).

It catalyses the reaction (2R)-2,3-dihydroxy-3-methylbutanoate = 3-methyl-2-oxobutanoate + H2O. The enzyme catalyses (2R,3R)-2,3-dihydroxy-3-methylpentanoate = (S)-3-methyl-2-oxopentanoate + H2O. Its pathway is amino-acid biosynthesis; L-isoleucine biosynthesis; L-isoleucine from 2-oxobutanoate: step 3/4. It functions in the pathway amino-acid biosynthesis; L-valine biosynthesis; L-valine from pyruvate: step 3/4. In terms of biological role, functions in the biosynthesis of branched-chain amino acids. Catalyzes the dehydration of (2R,3R)-2,3-dihydroxy-3-methylpentanoate (2,3-dihydroxy-3-methylvalerate) into 2-oxo-3-methylpentanoate (2-oxo-3-methylvalerate) and of (2R)-2,3-dihydroxy-3-methylbutanoate (2,3-dihydroxyisovalerate) into 2-oxo-3-methylbutanoate (2-oxoisovalerate), the penultimate precursor to L-isoleucine and L-valine, respectively. The sequence is that of Dihydroxy-acid dehydratase from Desulforudis audaxviator (strain MP104C).